We begin with the raw amino-acid sequence, 86 residues long: Toxin TdNa7 (86 aa).

A signal peptide spans 1 to 20 (MTRFVLFLSCFFLIGMVVEC). The LCN-type CS-alpha/beta domain maps to 21–83 (KDGYLMGPDG…TWERATNTCG (63 aa)). 4 disulfides stabilise this stretch: Cys31–Cys82, Cys35–Cys57, Cys43–Cys63, and Cys47–Cys65. At Lys84 the chain carries Lysine amide.

This sequence belongs to the long (4 C-C) scorpion toxin superfamily. Sodium channel inhibitor family. Beta subfamily. Expressed by the venom gland.

It is found in the secreted. Beta toxins bind voltage-independently at site-4 of sodium channels (Nav) and shift the voltage of activation toward more negative potentials thereby affecting sodium channel activation and promoting spontaneous and repetitive firing. The sequence is that of Toxin TdNa7 from Tityus discrepans (Venezuelan scorpion).